A 453-amino-acid polypeptide reads, in one-letter code: MNIVILAAGTGKRMRSALPKVLHPLAGRPLLSHVIDTARTLQPSRLVVVVGHGAEQVKAAVAAPDVQFAVQAEQLGTGHAVRQALPLLDPAQPTLVLYGDVPLTRASTLQRLVDAARDGRYGILTVTLDDPTGYGRIVRDASGFVTRIVEQKDASPEELKIAEINTGIIVTPTAQLSMWLGALKNENAQGEYYLTDVVELAIEAGFEVVTSQPDDEWETLGVNSKAQLAELERIHQRNVADALLVDGVTLADPARVDVRGTLRCGRDVSIDVNCVFEGNVTIADNVTIGANCVIRNASVGAGTRIDAFTHIDGAELGANTVIGPYARLRPGAQLADEAHVGNFVEVKNAVIGHGSKANHLTYIGDADIGARVNIGAGTITCNYDGANKFRTVIEDDVFVGSDTQLVAPVRVGRGVTIAAGTTIWKDVAEGVLALNEKTQTAKSGYVRPVKKKS.

A pyrophosphorylase region spans residues 1-225 (MNIVILAAGT…EWETLGVNSK (225 aa)). UDP-N-acetyl-alpha-D-glucosamine is bound by residues 6–9 (LAAG), K20, Q71, 76–77 (GT), 98–100 (YGD), G135, E150, N165, and N223. D100 lines the Mg(2+) pocket. N223 serves as a coordination point for Mg(2+). Residues 226 to 246 (AQLAELERIHQRNVADALLVD) are linker. An N-acetyltransferase region spans residues 247-453 (GVTLADPARV…GYVRPVKKKS (207 aa)). UDP-N-acetyl-alpha-D-glucosamine contacts are provided by R329 and K347. H359 acts as the Proton acceptor in catalysis. Residues Y362 and N373 each coordinate UDP-N-acetyl-alpha-D-glucosamine. Acetyl-CoA-binding positions include A376, 382 to 383 (NY), S401, and A419.

This sequence in the N-terminal section; belongs to the N-acetylglucosamine-1-phosphate uridyltransferase family. In the C-terminal section; belongs to the transferase hexapeptide repeat family. In terms of assembly, homotrimer. Mg(2+) is required as a cofactor.

It is found in the cytoplasm. It carries out the reaction alpha-D-glucosamine 1-phosphate + acetyl-CoA = N-acetyl-alpha-D-glucosamine 1-phosphate + CoA + H(+). The enzyme catalyses N-acetyl-alpha-D-glucosamine 1-phosphate + UTP + H(+) = UDP-N-acetyl-alpha-D-glucosamine + diphosphate. It functions in the pathway nucleotide-sugar biosynthesis; UDP-N-acetyl-alpha-D-glucosamine biosynthesis; N-acetyl-alpha-D-glucosamine 1-phosphate from alpha-D-glucosamine 6-phosphate (route II): step 2/2. It participates in nucleotide-sugar biosynthesis; UDP-N-acetyl-alpha-D-glucosamine biosynthesis; UDP-N-acetyl-alpha-D-glucosamine from N-acetyl-alpha-D-glucosamine 1-phosphate: step 1/1. The protein operates within bacterial outer membrane biogenesis; LPS lipid A biosynthesis. In terms of biological role, catalyzes the last two sequential reactions in the de novo biosynthetic pathway for UDP-N-acetylglucosamine (UDP-GlcNAc). The C-terminal domain catalyzes the transfer of acetyl group from acetyl coenzyme A to glucosamine-1-phosphate (GlcN-1-P) to produce N-acetylglucosamine-1-phosphate (GlcNAc-1-P), which is converted into UDP-GlcNAc by the transfer of uridine 5-monophosphate (from uridine 5-triphosphate), a reaction catalyzed by the N-terminal domain. The protein is Bifunctional protein GlmU of Burkholderia orbicola (strain AU 1054).